The chain runs to 342 residues: Cytosolic Fe-S cluster assembly factor NBP35 (342 aa).

The segment at 1-45 (MGPSLETPEPVEDVLANPLKQKPQLVAPEPEHCPGPESEQAGTAD) is disordered. The [4Fe-4S] cluster site is built by Cys-33, Cys-47, Cys-50, and Cys-56. 86–93 (GKGGVGKS) lines the ATP pocket. Residues Cys-259 and Cys-262 each contribute to the [4Fe-4S] cluster site.

Belongs to the Mrp/NBP35 ATP-binding proteins family. NUBP1/NBP35 subfamily. As to quaternary structure, heterotetramer of 2 NBP35 and 2 CFD1 chains. The cofactor is [4Fe-4S] cluster.

The protein resides in the cytoplasm. Component of the cytosolic iron-sulfur (Fe/S) protein assembly (CIA) machinery. Required for maturation of extramitochondrial Fe-S proteins. The NBP35-CFD1 heterotetramer forms a Fe-S scaffold complex, mediating the de novo assembly of an Fe-S cluster and its transfer to target apoproteins. This chain is Cytosolic Fe-S cluster assembly factor NBP35, found in Chaetomium globosum (strain ATCC 6205 / CBS 148.51 / DSM 1962 / NBRC 6347 / NRRL 1970) (Soil fungus).